A 432-amino-acid polypeptide reads, in one-letter code: Alcohol acyltransferase 9 (432 aa).

Active-site proton acceptor residues include His-156 and Asp-379.

The protein belongs to the plant acyltransferase family.

The catalysed reaction is 2-(methylsulfanyl)acetyl-CoA + butan-1-ol = butyl 2-(methylsulfanyl)acetate + CoA. It carries out the reaction ethanol + acetyl-CoA = ethyl acetate + CoA. It catalyses the reaction butan-1-ol + acetyl-CoA = butyl acetate + CoA. The enzyme catalyses butan-1-ol + propanoyl-CoA = butyl propanoate + CoA. Its function is as follows. Involved in the biosynthesis of volatile esters which confer kiwifruit flavor. Alcohol acyl transferase that can use a wide range of alcohols as substrate to produce esters. Exhibits acetyl-CoA:alcohol O-acyltransferase activity. The sequence is that of Alcohol acyltransferase 9 from Actinidia chinensis var. chinensis (Chinese soft-hair kiwi).